The chain runs to 320 residues: Ferrochelatase (320 aa).

Fe cation is bound by residues histidine 194 and glutamate 275.

The protein belongs to the ferrochelatase family. As to quaternary structure, monomer.

It is found in the cytoplasm. The enzyme catalyses heme b + 2 H(+) = protoporphyrin IX + Fe(2+). It participates in porphyrin-containing compound metabolism; protoheme biosynthesis; protoheme from protoporphyrin-IX: step 1/1. Its function is as follows. Catalyzes the ferrous insertion into protoporphyrin IX. The polypeptide is Ferrochelatase (Salmonella arizonae (strain ATCC BAA-731 / CDC346-86 / RSK2980)).